A 187-amino-acid polypeptide reads, in one-letter code: MGNKQTIFTDEQLDAYQDCTFFTRKEILRLHGRYHELAPHLVPMDYTNDPDVKVPLALIVNMPELKENPFRNRIVESFSEDGQGNLSFNDFVDMFSVLSEMAPRELKAIYAFKIYDFNVDNYICKEDLEKTLNKLTKEELTPEEVNLVCEKAIEEADLDGDNKLSFADFENMISRAPDFLSTFHIRI.

3 consecutive EF-hand domains span residues 66-101, 103-138, and 144-179; these read KENP…LSEM, PREL…LTKE, and EVNL…APDF. D157, D159, D161, K163, and D168 together coordinate Ca(2+).

Monomer. Homodimer. In terms of tissue distribution, enriched in central and striolar hair cells.

The protein resides in the cytoplasm. It localises to the cell projection. It is found in the stereocilium. The protein localises to the photoreceptor inner segment. Its subcellular location is the cilium. The protein resides in the photoreceptor outer segment. It localises to the cell membrane. It is found in the sarcolemma. Calcium- and integrin-binding protein. Plays a role in intracellular calcium homeostasis. Critical for proper photoreceptor cell maintenance and function. Essential for development, maintenance and function of mechanosensory hair cells. The chain is Calcium and integrin-binding family member 2 from Danio rerio (Zebrafish).